Reading from the N-terminus, the 362-residue chain is Endolytic peptidoglycan transglycosylase RlpA (362 aa).

The N-terminal stretch at 1–17 is a signal peptide; it reads MRKQWLGICIAAGMLAA. Cys-18 carries N-palmitoyl cysteine lipidation. Cys-18 carries S-diacylglycerol cysteine lipidation. The disordered stretch occupies residues 198-276; that stretch reads PDLSGGAGTS…PSTTPATSPA (79 aa). Positions 262–276 are enriched in low complexity; sequence PVVTAPSTTPATSPA. An SPOR domain is found at 285–361; it reads QSASGNFMVQ…AQLQSFITTA (77 aa).

This sequence belongs to the RlpA family.

It localises to the cell membrane. Functionally, lytic transglycosylase with a strong preference for naked glycan strands that lack stem peptides. The polypeptide is Endolytic peptidoglycan transglycosylase RlpA (Escherichia coli O157:H7).